A 300-amino-acid chain; its full sequence is UDP-N-acetylenolpyruvoylglucosamine reductase (300 aa).

In terms of domain architecture, FAD-binding PCMH-type spans 30–194 (KVGGPADFFA…LAAVFSLAAG (165 aa)). Arg174 is a catalytic residue. Catalysis depends on Ser223, which acts as the Proton donor. Glu293 is a catalytic residue.

This sequence belongs to the MurB family. FAD is required as a cofactor.

The protein resides in the cytoplasm. The enzyme catalyses UDP-N-acetyl-alpha-D-muramate + NADP(+) = UDP-N-acetyl-3-O-(1-carboxyvinyl)-alpha-D-glucosamine + NADPH + H(+). The protein operates within cell wall biogenesis; peptidoglycan biosynthesis. In terms of biological role, cell wall formation. The protein is UDP-N-acetylenolpyruvoylglucosamine reductase of Geotalea uraniireducens (strain Rf4) (Geobacter uraniireducens).